Reading from the N-terminus, the 278-residue chain is Envelope glycoprotein L (278 aa).

A signal peptide spans 1–30 (MCRRPDCGFSFSPGPVILLWCCLLLPIVSS). In terms of domain architecture, gL betaherpesvirus-type spans 43–256 (VPAECPELTR…DKYYAGLPPE (214 aa)). A disulfide bridge connects residues C154 and C159.

This sequence belongs to the herpesviridae glycoprotein L (gL) family. Betaherpesvirinae gL subfamily. In terms of assembly, interacts with glycoprotein H (gH); this interaction is necessary for the correct processing and cell surface expression of gH. Forms the envelope pentamer complex (PC) composed of gH, gL, UL128, UL130, and UL131A. The pentamer interacts with host NRP2. Forms the envelope trimer complex composed of gH, gL, and gO. The trimer interacts with host PDGFRA. The trimer also interacts with host EPHA2.

It is found in the virion membrane. The protein localises to the host cell membrane. The protein resides in the host Golgi apparatus. It localises to the host trans-Golgi network. Functionally, the heterodimer glycoprotein H-glycoprotein L is required for the fusion of viral and plasma membranes leading to virus entry into the host cell. Acts as a functional inhibitor of gH and maintains gH in an inhibited form. Upon binding to host integrins, gL dissociates from gH leading to activation of the viral fusion glycoproteins gB and gH. In human cytomegalovirus, forms two distincts complexes to mediate viral entry, a trimer and a pentamer at the surface of the virion envelope. The gH-gL-gO trimer is required for infection in fibroblasts by interacting with host PDGFRA, and in glioblastoma cells by interacting with host EPHA2. The gH-gL-UL128-UL130-UL131A pentamer is essential for viral entry in epithelial, endothelial and myeloid cells via interaction with host NRP2. The protein is Envelope glycoprotein L of Homo sapiens (Human).